A 125-amino-acid polypeptide reads, in one-letter code: Type-4 ice-structuring protein (125 aa).

The first 20 residues, 1-20 (MKYTLIAAIVVLALAQGTLA), serve as a signal peptide directing secretion.

This sequence belongs to the apolipoprotein A1/A4/E family.

Its subcellular location is the secreted. Antifreeze proteins lower the blood freezing point. This chain is Type-4 ice-structuring protein, found in Gadus morhua (Atlantic cod).